The primary structure comprises 265 residues: Oxidoreductase nsrR (265 aa).

This sequence belongs to the avfA family.

The protein operates within secondary metabolite biosynthesis. Functionally, oxidoreductase; part of the gene cluster that mediates the biosynthesis of the tetrahydroxanthone dimer neosartorin, which exhibits antibacterial activity. The two different monomeric units appear to be synthesized by the same set of enzymes, among which the Baeyer-Villiger monooxygenase nsrF is the key enzyme for the divergence of the biosynthetic routes. The pathway begins with the synthesis of atrochrysone thioester by the polyketide synthase nsrB. The atrochrysone carboxyl ACP thioesterase nsrC then breaks the thioester bond and releases the atrochrysone carboxylic acid from AacuL. Atrochrysone carboxylic acid is decarboxylated by the decarboxylase nsrE, and oxidized by the anthrone oxygenase nsrD to yield emodin. Emodin is then reduced to emodin hydroquinone by the oxidoreductase nsrR. A-ring reduction by the short chain dehydrogenase nsrJ, dehydration by the scytalone dehydratase-like protein nsrI and probable spontaneous re-oxidation, results in overall deoxygenation to chrysophanol. The Baeyer-Villiger monooxygenase nsrF accepts chrysophanol as a substrate to insert one oxygen atom at two different positions to yield the precursors of both monomric units. NsrF is promiscuous/flexible in interacting with the 2 (non methylated and methylated) aromatic rings of chrysophanol, thus diverging the biosynthetic pathway at this point. After the hydrolysis of the lactones, methylesterification by the methyltransferase nsrG yields respectively moniliphenone and 2,2',6'-trihydroxy-4-methyl-6-methoxya-cyldiphenylmethanone. The next steps are the hydroxylation by the FAD-dependent monooxygenase nsrK, followed by isomerization by the monooxygenase nsrQ. The short chain dehydrogenase/reductase nsrO then catalyzes the C-5 ketoreduction to give the xanthone skeleton of blennolide C and 5-acetylblennolide A. The acetyltransferase nsrL has a strict substrate specificity and uses only blennolide A but not blennolide C to yield 5-acetylblennolide A as the single-acetylated product. In the final step of the biosynthesis, the heterodimerization of the 2 xanthones, blennolide C and 5-acetylblennolide A, is catalyzed by the cytochrome P450 monooxygenase nsrP. NsrP can utilize at least three different xanthones as its substrates to perform the dimerization reaction. The polypeptide is Oxidoreductase nsrR (Aspergillus novofumigatus (strain IBT 16806)).